The following is a 235-amino-acid chain: PRA1 family protein 1 (235 aa).

The span at 1–17 (MESNSNSNETMYGNPNI) shows a compositional bias: polar residues. A disordered region spans residues 1–55 (MESNSNSNETMYGNPNINMGFVDSGNSNIGNNTGSMSPPPQQQQQPQQASSTPAG). Positions 24 to 48 (SGNSNIGNNTGSMSPPPQQQQQPQQ) are enriched in low complexity. Transmembrane regions (helical) follow at residues 144–164 (SVFFIITNPFYLLLLGVLLFI) and 187–207 (AFLSIYFLLYAGSSIFWLVGA).

This sequence belongs to the PRA1 family.

The protein resides in the membrane. Its function is as follows. May act as a general Rab protein regulator. This chain is PRA1 family protein 1 (prafA), found in Dictyostelium discoideum (Social amoeba).